Here is a 537-residue protein sequence, read N- to C-terminus: Cytochrome P450 monooxygenase AOL_s00215g282 (537 aa).

A helical membrane pass occupies residues 9–29 (ATVVLCGSIVTVSIAYVIFVV). Asn126 carries N-linked (GlcNAc...) asparagine glycosylation. Position 451 (Cys451) interacts with heme.

It belongs to the cytochrome P450 family. Heme is required as a cofactor.

The protein resides in the membrane. Its pathway is secondary metabolite biosynthesis; terpenoid biosynthesis. Functionally, cytochrome P450 monooxygenase; part of the gene cluster that mediates the biosynthesis of sesquiterpenyl epoxy-cyclohexenoids (SECs) such as anthrobotrisins and arthrosporols, metabolites that possess a novel hybrid carbon skeleton consisting of a polyketide-derived epoxycyclohexenol combined with a terpenoid-derived monocyclic sesquiterpenol substructure (PKS-PTS hybrid). The SEC pathway plays an important role for fungal soil colonization via decreasing fungal nematode-capturing ability. Within the pathway, the cytochrome P450 monooxygenase AOL_s00215g282 acts as a m-cresol hydrolase that converts m-cresol to toluquinol. The pathway begins with the biosynthesis of 6-methylsalicylic acid (6-MSA), the first precursor of the polyketide-derived epoxycyclohexenol in arthrosporols, by the polyketide synthase (PKS) AOL_s00215g283 via condensation of 1 acetate and 3 malonate units. The 6-methylsalicylic acid decarboxylase AOL_s00215g281 then catalyzes the decarboxylation of 6-methylsalicylic acid to yield m-cresol. The cytochrome P450 monooxygenase AOL_s00215g282 further oxidizes m-cresol to yield toluquinol. With the assistance of the oxidoreductase AOL_s00215g277, the polyprenyl transferase AOL_s00215g276 catalyzes the farnesylation of toluquinol to produce farnesyl hydroquinone, the hybrid precursor for biosynthesis of SECs. Farnesyl hydroquinone undergoes epoxidation and then subsequent dehydrogenation to form farnesyl epoxy-quinone, the first and simplest SEC. The cytochrome P450 monooxygenase AOL_s00215g278 and the FAD-dependent monooxygenase AOL_s00215g279 might be involved in the oxygenation of the phenol moiety, most likely in the epoxy formation. The cytochrome P450 monooxygenases AOL_s00215g274 and AOL_s00215g280 are involved in specific regional ketone reductions at respectively C-4 and C-1 of farnesyl epoxy-quinone PubMed:33823587. The sequence is that of Cytochrome P450 monooxygenase AOL_s00215g282 from Arthrobotrys oligospora (strain ATCC 24927 / CBS 115.81 / DSM 1491) (Nematode-trapping fungus).